Reading from the N-terminus, the 932-residue chain is Eukaryotic translation initiation factor 3 subunit A (932 aa).

The region spanning 309-492 (KPATANFVIL…NSISFSSDLF (184 aa)) is the PCI domain. Residues Ser-374 and Ser-501 each carry the phosphoserine modification. Residues 537 to 862 (LRKQQAEAAY…DEEISRKLAE (326 aa)) are a coiled coil. Residues 793-865 (AEEEAARAAE…ISRKLAEKAA (73 aa)) show a composition bias toward basic and acidic residues. The tract at residues 793–932 (AEEEAARAAE…PPSRRNQQQQ (140 aa)) is disordered. A phosphoserine mark is found at Ser-874, Ser-875, and Ser-877. A compositionally biased stretch (low complexity) spans 877 to 893 (SPGAWRRGGASAGGVSR).

This sequence belongs to the eIF-3 subunit A family. As to quaternary structure, component of the eukaryotic translation initiation factor 3 (eIF-3) complex. The eIF-3 complex appears to include tif32/eif3a, SPAC25G10.08/eif3b, tif33/eif3c, SPBC4C3.07/eif3f, tif35/eif3g and sum1/eif3i. This set of common subunits may also associate exclusively with either moe1/eif3d and int6/eif3e, or with SPAC821.05/eif3h and SPAC1751.03/eif3m. The eIF-3 complex may also include SPAC3A12.13c/eif3j.

It is found in the cytoplasm. Its function is as follows. RNA-binding component of the eukaryotic translation initiation factor 3 (eIF-3) complex, which is involved in protein synthesis of a specialized repertoire of mRNAs and, together with other initiation factors, stimulates binding of mRNA and methionyl-tRNAi to the 40S ribosome. The eIF-3 complex specifically targets and initiates translation of a subset of mRNAs involved in cell proliferation. This chain is Eukaryotic translation initiation factor 3 subunit A (tif32), found in Schizosaccharomyces pombe (strain 972 / ATCC 24843) (Fission yeast).